We begin with the raw amino-acid sequence, 75 residues long: Large ribosomal subunit protein bL31 (75 aa).

It belongs to the bacterial ribosomal protein bL31 family. Type A subfamily. In terms of assembly, part of the 50S ribosomal subunit.

In terms of biological role, binds the 23S rRNA. In Bradyrhizobium diazoefficiens (strain JCM 10833 / BCRC 13528 / IAM 13628 / NBRC 14792 / USDA 110), this protein is Large ribosomal subunit protein bL31.